The chain runs to 201 residues: Small ribosomal subunit protein uS4c (201 aa).

The interval 15–43 (LGALPGLTNKRPRAGSDLRNQSRSGKRSQ) is disordered. The S4 RNA-binding domain maps to 89-149 (MRLDNILFRL…DEQKSIALIQ (61 aa)).

As to quaternary structure, component of the chloroplast small ribosomal subunit (SSU). Mature 70S chloroplast ribosomes of higher plants consist of a small (30S) and a large (50S) subunit. The 30S small subunit contains 1 molecule of ribosomal RNA (16S rRNA) and 24 different proteins. The 50S large subunit contains 3 rRNA molecules (23S, 5S and 4.5S rRNA) and 33 different proteins.

The protein resides in the plastid. The protein localises to the chloroplast. In terms of biological role, component of the chloroplast ribosome (chloro-ribosome), a dedicated translation machinery responsible for the synthesis of chloroplast genome-encoded proteins, including proteins of the transcription and translation machinery and components of the photosynthetic apparatus. The protein is Small ribosomal subunit protein uS4c (rps4) of Spinacia oleracea (Spinach).